Here is a 192-residue protein sequence, read N- to C-terminus: Peptidyl-tRNA hydrolase (192 aa).

TRNA is bound at residue Y14. H19 (proton acceptor) is an active-site residue. Residues Y61, N63, and N107 each coordinate tRNA.

This sequence belongs to the PTH family. Monomer.

The protein localises to the cytoplasm. The catalysed reaction is an N-acyl-L-alpha-aminoacyl-tRNA + H2O = an N-acyl-L-amino acid + a tRNA + H(+). Its function is as follows. Hydrolyzes ribosome-free peptidyl-tRNAs (with 1 or more amino acids incorporated), which drop off the ribosome during protein synthesis, or as a result of ribosome stalling. Functionally, catalyzes the release of premature peptidyl moieties from peptidyl-tRNA molecules trapped in stalled 50S ribosomal subunits, and thus maintains levels of free tRNAs and 50S ribosomes. The chain is Peptidyl-tRNA hydrolase from Wolinella succinogenes (strain ATCC 29543 / DSM 1740 / CCUG 13145 / JCM 31913 / LMG 7466 / NCTC 11488 / FDC 602W) (Vibrio succinogenes).